The sequence spans 345 residues: Myb/SANT-like DNA-binding domain-containing protein 4 (345 aa).

The region spanning 4–77 (LKRKRKSNFS…EVKRRYLDWR (74 aa)) is the Myb-like domain. Lys-9 is covalently cross-linked (Glycyl lysine isopeptide (Lys-Gly) (interchain with G-Cter in SUMO2)). Ser-106 is subject to Phosphoserine. Residues Lys-114 and Lys-142 each participate in a glycyl lysine isopeptide (Lys-Gly) (interchain with G-Cter in SUMO2) cross-link. The tract at residues 141-160 (VKVEEEERDPQSPEFEIEEE) is disordered. At Thr-188 the chain carries Phosphothreonine. Residues 203–345 (LLVNIEKQKL…LRIQKEGHLQ (143 aa)) are a coiled coil. Glycyl lysine isopeptide (Lys-Gly) (interchain with G-Cter in SUMO2) cross-links involve residues Lys-237, Lys-254, and Lys-273.

The protein is Myb/SANT-like DNA-binding domain-containing protein 4 (MSANTD4) of Bos taurus (Bovine).